Reading from the N-terminus, the 431-residue chain is Probable oxidoreductase OrdL (431 aa).

The protein is Probable oxidoreductase OrdL (ordL) of Haemophilus influenzae (strain ATCC 51907 / DSM 11121 / KW20 / Rd).